The following is a 397-amino-acid chain: Erythromycin C-12 hydroxylase (397 aa).

74-75 (HE) contacts substrate. His-81 and Arg-85 together coordinate heme. Position 278 (Gln-278) interacts with substrate. Heme is bound at residue Arg-279. The span at 307–322 (RDSDAHDDPDRFDPSR) shows a compositional bias: basic and acidic residues. The interval 307–326 (RDSDAHDDPDRFDPSRKSGG) is disordered. Residues His-337 and Cys-339 each coordinate heme.

Belongs to the cytochrome P450 family. As to quaternary structure, monomer. Heme b serves as cofactor.

It carries out the reaction erythromycin D + NADPH + O2 + H(+) = erythromycin C + NADP(+) + H2O. Its pathway is antibiotic biosynthesis; erythromycin biosynthesis. In terms of biological role, responsible for the C-12 hydroxylation of the macrolactone ring of erythromycin. Thus, EryK catalyzes the hydroxylation of erythromycin D (ErD) at the C-12 position to produce erythromycin C (ErC). Erythromycin B (ErB) is not a substrate for this enzyme. In Saccharopolyspora erythraea (strain ATCC 11635 / DSM 40517 / JCM 4748 / NBRC 13426 / NCIMB 8594 / NRRL 2338), this protein is Erythromycin C-12 hydroxylase (eryK).